The following is a 328-amino-acid chain: WUSCHEL-related homeobox 6 (328 aa).

Residues 1-11 (MEGSSNSPDRQ) show a composition bias toward polar residues. The interval 1-45 (MEGSSNSPDRQSSGGSPPEERGGGGSGGGGGRSAAGEPVRSRWTP) is disordered. Residues 23–33 (GGGSGGGGGRS) show a composition bias toward gly residues. The segment at residues 38–102 (PVRSRWTPKP…NRRSRSRRRQ (65 aa)) is a DNA-binding region (homeobox; WUS-type).

The protein belongs to the WUS homeobox family.

The protein localises to the nucleus. Functionally, transcription factor which may be involved in developmental processes. The protein is WUSCHEL-related homeobox 6 (WOX6) of Oryza sativa subsp. japonica (Rice).